Consider the following 808-residue polypeptide: Zinc finger protein 841 (808 aa).

K137 is covalently cross-linked (Glycyl lysine isopeptide (Lys-Gly) (interchain with G-Cter in SUMO2)). The C2H2-type 1; degenerate zinc finger occupies 145–167 (YIGNECGKAFRVSSSLINHQMIH). The C2H2-type 2; degenerate zinc-finger motif lies at 173 to 195 (YRCNESGKAFHRGSLLTVHQIVH). 13 C2H2-type zinc fingers span residues 201 to 223 (YQCD…RRSH), 229 to 251 (YICN…QRIH), 257 to 279 (YKCN…QTVH), 285 to 307 (YKCN…HIIH), 313 to 335 (YTCD…QIIH), 341 to 363 (YKCN…RRIH), 369 to 391 (YKCN…QRVH), 397 to 419 (YKCN…QRIH), 425 to 447 (YKCN…MRCH), 453 to 475 (LHCN…QRMH), 481 to 503 (YKCN…RRSH), 509 to 531 (FQCN…RKIH), and 537 to 559 (YKCN…LVIH). Glycyl lysine isopeptide (Lys-Gly) (interchain with G-Cter in SUMO2) cross-links involve residues K554 and K579. A C2H2-type 16; degenerate zinc finger spans residues 565 to 587 (YHCNEFGEAFIQSSKLARYHRNP). 7 C2H2-type zinc fingers span residues 593-615 (HKCS…QRRH), 621-643 (YKCI…RRIH), 649-671 (YKCN…WSIH), 677-699 (YKCN…QMMH), 705-727 (YKCN…QRNH), 733-755 (YKCM…QRIH), and 761-783 (YKCN…QIKH). Residue K791 forms a Glycyl lysine isopeptide (Lys-Gly) (interchain with G-Cter in SUMO2) linkage.

It belongs to the krueppel C2H2-type zinc-finger protein family.

Its subcellular location is the nucleus. In terms of biological role, may be involved in transcriptional regulation. The sequence is that of Zinc finger protein 841 (ZNF841) from Homo sapiens (Human).